Here is a 157-residue protein sequence, read N- to C-terminus: Phosphopantetheine adenylyltransferase (157 aa).

S8 lines the substrate pocket. Residues 8-9 and H16 contribute to the ATP site; that span reads SF. Substrate contacts are provided by K40, T72, and R86. ATP contacts are provided by residues 87–89, E97, and 122–128; these read GLR and YSFLSSS.

This sequence belongs to the bacterial CoaD family. As to quaternary structure, homohexamer. Mg(2+) serves as cofactor.

It localises to the cytoplasm. It catalyses the reaction (R)-4'-phosphopantetheine + ATP + H(+) = 3'-dephospho-CoA + diphosphate. Its pathway is cofactor biosynthesis; coenzyme A biosynthesis; CoA from (R)-pantothenate: step 4/5. Functionally, reversibly transfers an adenylyl group from ATP to 4'-phosphopantetheine, yielding dephospho-CoA (dPCoA) and pyrophosphate. In Crocosphaera subtropica (strain ATCC 51142 / BH68) (Cyanothece sp. (strain ATCC 51142)), this protein is Phosphopantetheine adenylyltransferase.